Here is a 699-residue protein sequence, read N- to C-terminus: DNA ligase (699 aa).

The segment at Met-1–Arg-20 is disordered. NAD(+) is bound by residues Asp-43 to Asp-47, Ser-92 to Leu-93, and Glu-126. Residue Lys-128 is the N6-AMP-lysine intermediate of the active site. Residues Arg-149, Glu-185, Lys-301, and Lys-325 each contribute to the NAD(+) site. Positions 419, 422, 443, and 449 each coordinate Zn(2+). A BRCT domain is found at Ala-621–Glu-699.

This sequence belongs to the NAD-dependent DNA ligase family. LigA subfamily. Requires Mg(2+) as cofactor. The cofactor is Mn(2+).

The enzyme catalyses NAD(+) + (deoxyribonucleotide)n-3'-hydroxyl + 5'-phospho-(deoxyribonucleotide)m = (deoxyribonucleotide)n+m + AMP + beta-nicotinamide D-nucleotide.. In terms of biological role, DNA ligase that catalyzes the formation of phosphodiester linkages between 5'-phosphoryl and 3'-hydroxyl groups in double-stranded DNA using NAD as a coenzyme and as the energy source for the reaction. It is essential for DNA replication and repair of damaged DNA. The polypeptide is DNA ligase (Beijerinckia indica subsp. indica (strain ATCC 9039 / DSM 1715 / NCIMB 8712)).